A 439-amino-acid polypeptide reads, in one-letter code: Protein CNPPD1 (439 aa).

The chain crosses the membrane as a helical span at residues 231–251; sequence CLLGVVYLTGFAAVFTSIAVV. A disordered region spans residues 283–302; it reads ALAPEQPQPKLPDVSPPSST.

This sequence belongs to the CNPPD1 family.

It is found in the membrane. This chain is Protein CNPPD1 (CNPPD1), found in Gallus gallus (Chicken).